The following is a 44-amino-acid chain: Thymosin beta (44 aa).

The segment at Met1–Gly44 is disordered. Ser2 is subject to N-acetylserine.

Expressed in regenerating axons.

Its subcellular location is the cytoplasm. The protein resides in the cytoskeleton. Functionally, plays an important role in the organization of the cytoskeleton. Binds to and sequesters actin monomers (G actin) and therefore inhibits actin polymerization. May be involved in the regulation of structural plasticity in the CNS. The polypeptide is Thymosin beta (Aplysia californica (California sea hare)).